The primary structure comprises 90 residues: MFESEAELRRIRIALVWIAVFLLFGACGNQDTIIETDNGNSDYETPQPTSFPLEHNHFGVMEDGYIKIYEYNESRNEVKLKKEYADDELE.

The signal sequence occupies residues 1 to 26; it reads MFESEAELRRIRIALVWIAVFLLFGA.

This is an uncharacterized protein from Bacillus subtilis (strain 168).